The chain runs to 563 residues: Putative ABC transporter ATP-binding protein SCO2324 (563 aa).

The region spanning 2-243 (IRFEDVSVTY…SPVYPPVVGL (242 aa)) is the ABC transporter 1 domain. 36 to 43 (GPSGVGKS) contributes to the ATP binding site. Positions 271 to 317 (AGREIPDHTPPPSAPLPAPPAPRPVTSRWRRRGKRPENPSAPTPYAA) are disordered. Pro residues predominate over residues 278–293 (HTPPPSAPLPAPPAPR). The ABC transporter 2 domain occupies 317–545 (AEVRSLAVRR…SPSYAPQVAK (229 aa)). 349-356 (GRNGAGKS) contributes to the ATP binding site.

This sequence belongs to the ABC transporter superfamily.

It is found in the cell membrane. Functionally, probably part of an ABC transporter complex. Responsible for energy coupling to the transport system. The sequence is that of Putative ABC transporter ATP-binding protein SCO2324 from Streptomyces coelicolor (strain ATCC BAA-471 / A3(2) / M145).